The following is a 1157-amino-acid chain: Zinc finger protein 516 (1157 aa).

Positions 1–13 are enriched in basic and acidic residues; sequence MDRSREAEMELRR. Residues 1–26 form a disordered region; it reads MDRSREAEMELRRGPSPPRAGRSHEV. The interval 1–420 is mediates promoter DNA-binding and activation of transcription; it reads MDRSREAEME…ATRGKVAEPA (420 aa). 7 consecutive C2H2-type zinc fingers follow at residues 34 to 56, 62 to 84, 162 to 185, 188 to 211, 236 to 258, 264 to 286, and 323 to 345; these read HSCC…MRKH, YKCP…IRSH, VPCS…HQAH, FKCR…ERDH, FPCE…MKKH, HGCH…MKAH, and EVCT…NAIH. The segment covering 449–458 has biased composition (basic and acidic residues); that stretch reads SQEKRKREQD. Disordered stretches follow at residues 449–503 and 523–653; these read SQEK…QGKS and SRVH…KGPE. Over residues 494–503 the composition is skewed to polar residues; the sequence is ASATTGQGKS. The segment at 504–526 adopts a C2H2-type 8 zinc-finger fold; sequence SECFECGKIFRTYHQMVLHSRVH. Residues 531-541 are compositionally biased toward basic and acidic residues; it reads RDRDPEGDRAA. The segment covering 550–561 has biased composition (polar residues); that stretch reads EGDSASQPSSPG. Over residues 575–585 the composition is skewed to acidic residues; that stretch reads EVVDDSGEEAV. The segment covering 601 to 612 has biased composition (polar residues); that stretch reads GEVTPTALSNGD. Lysine 630 participates in a covalent cross-link: Glycyl lysine isopeptide (Lys-Gly) (interchain with G-Cter in SUMO2). Basic and acidic residues predominate over residues 644–653; the sequence is SSRETTKGPE. Lysine 669 participates in a covalent cross-link: Glycyl lysine isopeptide (Lys-Gly) (interchain with G-Cter in SUMO2). The C2H2-type 9; atypical zinc-finger motif lies at 753–776; sequence HPCPYCTHKTYYPEVLWMHKRIWH. Disordered stretches follow at residues 831-996 and 1013-1040; these read TQVP…EPSV and RGEA…AEGQ. Over residues 914–928 the composition is skewed to polar residues; that stretch reads GSGSLSRSTTPTPSV. Residues lysine 1032 and lysine 1051 each participate in a glycyl lysine isopeptide (Lys-Gly) (interchain with G-Cter in SUMO2) cross-link. The C2H2-type 10 zinc finger occupies 1092-1114; the sequence is FVCVECGKSFHQPSQLRAHLRAH. The interval 1123-1157 is disordered; it reads PRDSEVHTASTDAPKQGRDHTTPGTVPAGPLRKGI.

Belongs to the krueppel C2H2-type zinc-finger protein family. As to quaternary structure, interacts with PRDM16; the interaction is direct and may play a role in the transcription of brown adipose tissue-specific genes. Interacts with PWWP2B. Interacts with HDAC1; this interaction is enhanced in the presence of PWWP2B. Expressed by adipocytes more specifically in brown adipose tissue compared to white adipose tissue (WAT).

It localises to the nucleus. In terms of biological role, transcriptional regulator that binds to the promoter and activates the transcription of genes promoting brown adipose tissue (BAT) differentiation. Among brown adipose tissue-specific genes, binds the proximal region of the promoter of the UCP1 gene to activate its transcription and thereby regulate thermogenesis. May also play a role in the cellular response to replication stress. This Mus musculus (Mouse) protein is Zinc finger protein 516.